Reading from the N-terminus, the 391-residue chain is Cyclin-A1 (391 aa).

The protein belongs to the cyclin family. Cyclin AB subfamily. In terms of assembly, interacts with the CDK1 and the CDK2 protein kinases to form a serine/threonine kinase holoenzyme complex. The cyclin subunit imparts substrate specificity to the complex.

Its subcellular location is the nucleus. May be involved in the control of the cell cycle at the G1/S (start) and G2/M (mitosis) transitions. This chain is Cyclin-A1 (ccna1), found in Carassius auratus (Goldfish).